The following is a 395-amino-acid chain: uncharacterized protein (395 aa).

Disordered regions lie at residues 1–121 (MLLP…TANS), 136–187 (MRMK…LDRN), 308–335 (QNNE…SKDE), and 365–395 (IQKF…NEGD). The segment covering 13–28 (PKGEAKSLVARERKSQ) has biased composition (basic and acidic residues). Residues 64–73 (KSAKLRRKKS) show a composition bias toward basic residues. Basic and acidic residues predominate over residues 97 to 111 (SIEKKKEEMTSKLPE). Over residues 144 to 164 (TSRMATKSDSSLETMPESSHN) the composition is skewed to polar residues. Residues 170–179 (KSRKSQRTRG) show a composition bias toward basic residues. Residues 365–377 (IQKFRKKYQKQLK) are compositionally biased toward basic residues. Residues 378-395 (KSQEEKKDDTKTAKNEGD) are compositionally biased toward basic and acidic residues.

This is an uncharacterized protein from Caenorhabditis elegans.